The primary structure comprises 505 residues: Protein ERGIC-53-like (505 aa).

An N-terminal signal peptide occupies residues 1-25 (MLEIRGLSPSLCLLSLLLVLHGAER). The Lumenal portion of the chain corresponds to 26 to 438 (SQPPPRRRFE…SGWLLGSSTC (413 aa)). Residues 32–254 (RRFEYKLSFK…DVLSFLTFSL (223 aa)) enclose the L-type lectin-like domain. An N-linked (GlcNAc...) asparagine glycan is attached at Asn84. An intrachain disulfide couples Cys177 to Cys216. The helical transmembrane segment at 439–459 (LHTSIFLFFLLLQTVGFFCYV) threads the bilayer. The Cytoplasmic portion of the chain corresponds to 460–505 (NFSRQELDKRLQEYLSTGSLSLEPALPITRTIGVLRRQPISPSMQA).

The protein localises to the endoplasmic reticulum-Golgi intermediate compartment membrane. This is Protein ERGIC-53-like (Lman1l) from Mus musculus (Mouse).